The primary structure comprises 121 residues: Large ribosomal subunit protein uL14 (121 aa).

It belongs to the universal ribosomal protein uL14 family. Part of the 50S ribosomal subunit. Forms a cluster with proteins L3 and L19. In the 70S ribosome, L14 and L19 interact and together make contacts with the 16S rRNA in bridges B5 and B8.

Functionally, binds to 23S rRNA. Forms part of two intersubunit bridges in the 70S ribosome. The sequence is that of Large ribosomal subunit protein uL14 from Prochlorococcus marinus (strain NATL1A).